Here is a 54-residue protein sequence, read N- to C-terminus: Large ribosomal subunit protein bL32c (54 aa).

The protein belongs to the bacterial ribosomal protein bL32 family.

It is found in the plastid. The protein resides in the chloroplast. In Piper cenocladum (Ant piper), this protein is Large ribosomal subunit protein bL32c.